Reading from the N-terminus, the 281-residue chain is Shikimate dehydrogenase (NADP(+)) (281 aa).

Shikimate contacts are provided by residues 15–17 (SKS) and Thr62. Lys66 functions as the Proton acceptor in the catalytic mechanism. The shikimate site is built by Asn87 and Asp102. Residues 127–131 (GAGGS), 151–156 (NRTPER), and Leu217 contribute to the NADP(+) site. Tyr219 is a shikimate binding site. Gly241 contributes to the NADP(+) binding site.

This sequence belongs to the shikimate dehydrogenase family. As to quaternary structure, homodimer.

The enzyme catalyses shikimate + NADP(+) = 3-dehydroshikimate + NADPH + H(+). It participates in metabolic intermediate biosynthesis; chorismate biosynthesis; chorismate from D-erythrose 4-phosphate and phosphoenolpyruvate: step 4/7. Its function is as follows. Involved in the biosynthesis of the chorismate, which leads to the biosynthesis of aromatic amino acids. Catalyzes the reversible NADPH linked reduction of 3-dehydroshikimate (DHSA) to yield shikimate (SA). This Stenotrophomonas maltophilia (strain K279a) protein is Shikimate dehydrogenase (NADP(+)).